The primary structure comprises 418 residues: Coenzyme A biosynthesis bifunctional protein CoaBC (418 aa).

Residues 1–195 are phosphopantothenoylcysteine decarboxylase; the sequence is MVDHKRIPKQ…ALPYDLAGRK (195 aa). A phosphopantothenate--cysteine ligase region spans residues 196 to 418; that stretch reads LLVTAGGTRE…IVTFLAGCSS (223 aa). Residues Asp-285, Lys-295, Phe-336, Lys-354, and Lys-358 each coordinate CTP.

This sequence in the N-terminal section; belongs to the HFCD (homo-oligomeric flavin containing Cys decarboxylase) superfamily. In the C-terminal section; belongs to the PPC synthetase family. Mg(2+) serves as cofactor. The cofactor is FMN.

It carries out the reaction N-[(R)-4-phosphopantothenoyl]-L-cysteine + H(+) = (R)-4'-phosphopantetheine + CO2. It catalyses the reaction (R)-4'-phosphopantothenate + L-cysteine + CTP = N-[(R)-4-phosphopantothenoyl]-L-cysteine + CMP + diphosphate + H(+). The protein operates within cofactor biosynthesis; coenzyme A biosynthesis; CoA from (R)-pantothenate: step 2/5. It functions in the pathway cofactor biosynthesis; coenzyme A biosynthesis; CoA from (R)-pantothenate: step 3/5. Catalyzes two sequential steps in the biosynthesis of coenzyme A. In the first step cysteine is conjugated to 4'-phosphopantothenate to form 4-phosphopantothenoylcysteine. In the second step the latter compound is decarboxylated to form 4'-phosphopantotheine. In Mycobacterium bovis (strain ATCC BAA-935 / AF2122/97), this protein is Coenzyme A biosynthesis bifunctional protein CoaBC.